We begin with the raw amino-acid sequence, 132 residues long: Small ribosomal subunit protein uS8 (132 aa).

The protein belongs to the universal ribosomal protein uS8 family. In terms of assembly, part of the 30S ribosomal subunit. Contacts proteins S5 and S12.

One of the primary rRNA binding proteins, it binds directly to 16S rRNA central domain where it helps coordinate assembly of the platform of the 30S subunit. The protein is Small ribosomal subunit protein uS8 of Staphylococcus carnosus (strain TM300).